Here is a 178-residue protein sequence, read N- to C-terminus: M-phase-specific PLK1-interacting protein (178 aa).

A compositionally biased stretch (pro residues) spans 1-15 (MHRPNFRPPTPPYPS). The interval 1–134 (MHRPNFRPPT…RGREKRMSNE (134 aa)) is disordered. Over residues 17–34 (GIGGWGGGNNFRGALGGG) the composition is skewed to gly residues. Residue Arg36 is modified to Asymmetric dimethylarginine. 2 positions are modified to phosphoserine: Ser39 and Ser46. Thr50 is subject to Phosphothreonine. The residue at position 56 (Arg56) is an Omega-N-methylarginine. 3 positions are modified to asymmetric dimethylarginine: Arg58, Arg67, and Arg76. The segment covering 78 to 96 (GSPSPGGYPGSYSRSPAGS) has biased composition (low complexity). Phosphoserine is present on residues Ser79, Ser81, Ser92, Ser103, and Ser114. Over residues 97–121 (QHQFGYSPGQQQTYPQGSPRTSTPF) the composition is skewed to polar residues. Omega-N-methylarginine is present on Arg116. Thr119 carries the phosphothreonine modification. A phosphoserine mark is found at Ser123 and Ser132.

As to quaternary structure, interacts with PLK1; phosphorylation-dependent. In terms of processing, phosphorylated during mitosis in the cell cycle probably by CDK1.

It is found in the nucleus. The protein resides in the cytoplasm. Its subcellular location is the cytoskeleton. The protein localises to the microtubule organizing center. It localises to the centrosome. Its function is as follows. May play a role in maintenance of cell cycle integrity by regulating mitosis or cytokinesis. This chain is M-phase-specific PLK1-interacting protein (Mplkip), found in Mus musculus (Mouse).